The sequence spans 208 residues: 3-demethoxyubiquinol 3-hydroxylase (208 aa).

Residues Glu-57, Glu-87, His-90, Glu-139, Glu-171, and His-174 each contribute to the Fe cation site.

Belongs to the COQ7 family. It depends on Fe cation as a cofactor.

The protein localises to the cell membrane. It carries out the reaction a 5-methoxy-2-methyl-3-(all-trans-polyprenyl)benzene-1,4-diol + AH2 + O2 = a 3-demethylubiquinol + A + H2O. It functions in the pathway cofactor biosynthesis; ubiquinone biosynthesis. Its function is as follows. Catalyzes the hydroxylation of 2-nonaprenyl-3-methyl-6-methoxy-1,4-benzoquinol during ubiquinone biosynthesis. The chain is 3-demethoxyubiquinol 3-hydroxylase from Burkholderia ambifaria (strain MC40-6).